Here is a 1451-residue protein sequence, read N- to C-terminus: DNA polymerase III PolC-type (1451 aa).

Residues 416–575 enclose the Exonuclease domain; the sequence is FVIFDIETTG…YDTEALKKVF (160 aa).

Belongs to the DNA polymerase type-C family. PolC subfamily.

The protein localises to the cytoplasm. The catalysed reaction is DNA(n) + a 2'-deoxyribonucleoside 5'-triphosphate = DNA(n+1) + diphosphate. Required for replicative DNA synthesis. This DNA polymerase also exhibits 3' to 5' exonuclease activity. This chain is DNA polymerase III PolC-type, found in Mycoplasma genitalium (strain ATCC 33530 / DSM 19775 / NCTC 10195 / G37) (Mycoplasmoides genitalium).